The primary structure comprises 232 residues: Ribonuclease 3 (232 aa).

The 128-residue stretch at 6 to 133 (LKEIEENLGV…IIAAVYLDKG (128 aa)) folds into the RNase III domain. Glu46 lines the Mg(2+) pocket. The active site involves Asp50. Positions 119 and 122 each coordinate Mg(2+). The active site involves Glu122. Residues 160–229 (DFKTKLQELL…AKQALDILEG (70 aa)) form the DRBM domain.

Belongs to the ribonuclease III family. In terms of assembly, homodimer. It depends on Mg(2+) as a cofactor.

The protein localises to the cytoplasm. It catalyses the reaction Endonucleolytic cleavage to 5'-phosphomonoester.. Its function is as follows. Digests double-stranded RNA. Involved in the processing of primary rRNA transcript to yield the immediate precursors to the large and small rRNAs (23S and 16S). Processes some mRNAs, and tRNAs when they are encoded in the rRNA operon. Processes pre-crRNA and tracrRNA of type II CRISPR loci if present in the organism. This Clostridium beijerinckii (strain ATCC 51743 / NCIMB 8052) (Clostridium acetobutylicum) protein is Ribonuclease 3.